The following is a 146-amino-acid chain: Transcription initiation factor TFIID subunit 10b (146 aa).

The disordered stretch occupies residues 16–43 (GASSHGQSSGGGGGGDRDRTTPSSHLSD).

Belongs to the TAF10 family. As to quaternary structure, belongs to the TFIID complex which is composed of TATA binding protein (Tbp) and a number of TBP-associated factors (TAFs). The N-terminus interacts with the histone fold of Taf8. At embryonic stage 9, expression is seen in the mesodermal layer and midgut primordia. The mesoderm-specific expression persists in later stages of development and at its highest level is detected in midgut, hindgut, and differentiating somatic muscle fibers. Coexpressed with Taf10 in the lateral epidermis and anal plate.

It is found in the cytoplasm. Its subcellular location is the nucleus. In terms of biological role, TFIID is a multimeric protein complex that plays a central role in mediating promoter responses to various activators and repressors. This Drosophila melanogaster (Fruit fly) protein is Transcription initiation factor TFIID subunit 10b.